The primary structure comprises 363 residues: 3-dehydroquinate synthase (363 aa).

NAD(+) contacts are provided by residues 71 to 76, 105 to 109, 129 to 130, K142, K151, and 169 to 172; these read DGEQYK, GVIGD, TT, and CLKT. Zn(2+) is bound by residues E184, H247, and H264.

It belongs to the sugar phosphate cyclases superfamily. Dehydroquinate synthase family. NAD(+) is required as a cofactor. It depends on Co(2+) as a cofactor. The cofactor is Zn(2+).

The protein localises to the cytoplasm. The enzyme catalyses 7-phospho-2-dehydro-3-deoxy-D-arabino-heptonate = 3-dehydroquinate + phosphate. It participates in metabolic intermediate biosynthesis; chorismate biosynthesis; chorismate from D-erythrose 4-phosphate and phosphoenolpyruvate: step 2/7. Its function is as follows. Catalyzes the conversion of 3-deoxy-D-arabino-heptulosonate 7-phosphate (DAHP) to dehydroquinate (DHQ). This chain is 3-dehydroquinate synthase, found in Vibrio vulnificus (strain CMCP6).